The chain runs to 1050 residues: Valine--tRNA ligase (1050 aa).

The span at 37-57 shows a compositional bias: basic and acidic residues; that stretch reads EKKAAASDKPVKEAKAKKEQT. Residues 37 to 72 are disordered; that stretch reads EKKAAASDKPVKEAKAKKEQTVEAAEPVDQTPTGQR. Positions 127–137 match the 'HIGH' region motif; it reads PNVTGNLHVGH. A 'KMSKS' region motif is present at residues 642 to 646; the sequence is KMSKS. K645 lines the ATP pocket.

This sequence belongs to the class-I aminoacyl-tRNA synthetase family.

It carries out the reaction tRNA(Val) + L-valine + ATP = L-valyl-tRNA(Val) + AMP + diphosphate. The sequence is that of Valine--tRNA ligase from Caenorhabditis elegans.